Consider the following 384-residue polypeptide: Glucans biosynthesis protein C (384 aa).

10 consecutive transmembrane segments (helical) span residues 17–37 (AWLMLLGIPFHISLIYSTHSW), 54–74 (FIHAFRMQVFFVISGYFSYML), 91–111 (VGIPMLTAIPLLTLPQFILLQ), 140–160 (LWFLLVLVILTTVSIGIFTWF), 173–193 (AISLAKLSLIFFLLGVAYAAI), 212–232 (FIVMQTLFYVPFFILGALAFI), 240–260 (FTTPSRGCTLGAAVAFIAYLL), 274–294 (TESVITMVMGLWMVNVVFSLG), 311–331 (ASLFIYLVHHPLTLFFGAYIT), and 338–358 (LIGFLCGLIFVMGIALILYEI).

Belongs to the acyltransferase 3 family. OpgC subfamily.

The protein resides in the cell membrane. It functions in the pathway glycan metabolism; osmoregulated periplasmic glucan (OPG) biosynthesis. Its function is as follows. Necessary for the succinyl substitution of periplasmic glucans. Could catalyze the transfer of succinyl residues from the cytoplasmic side of the membrane to the nascent glucan backbones on the periplasmic side of the membrane. This chain is Glucans biosynthesis protein C, found in Salmonella heidelberg (strain SL476).